The chain runs to 259 residues: Triosephosphate isomerase (259 aa).

A substrate-binding site is contributed by 10-12 (NWK). The active-site Electrophile is histidine 102. Glutamate 174 serves as the catalytic Proton acceptor. Substrate is bound by residues glycine 180, serine 220, and 241–242 (GG).

Belongs to the triosephosphate isomerase family. In terms of assembly, homodimer.

It localises to the cytoplasm. The catalysed reaction is D-glyceraldehyde 3-phosphate = dihydroxyacetone phosphate. Its pathway is carbohydrate biosynthesis; gluconeogenesis. It functions in the pathway carbohydrate degradation; glycolysis; D-glyceraldehyde 3-phosphate from glycerone phosphate: step 1/1. Involved in the gluconeogenesis. Catalyzes stereospecifically the conversion of dihydroxyacetone phosphate (DHAP) to D-glyceraldehyde-3-phosphate (G3P). The protein is Triosephosphate isomerase of Cutibacterium acnes (strain DSM 16379 / KPA171202) (Propionibacterium acnes).